We begin with the raw amino-acid sequence, 247 residues long: T-cell surface glycoprotein CD8 alpha chain (247 aa).

Residues 1–27 (MASPLTRFLSLNLLLLGESIILGSGEA) form the signal peptide. The Ig-like V-type domain occupies 28-139 (KPQAPELRIF…SVISNSVMYF (112 aa)). Residues 28–196 (KPQAPELRIF…TGLDFACDIY (169 aa)) are Extracellular-facing. A disulfide bridge connects residues Cys-53 and Cys-129. Residues Asn-69, Asn-97, and Asn-150 are each glycosylated (N-linked (GlcNAc...) asparagine). The interval 156 to 182 (PVLRTPSPVHPTGTSQPQRPEDCRPRG) is disordered. A helical transmembrane segment spans residues 197-217 (IWAPLAGICVALLLSLIITLI). The Cytoplasmic portion of the chain corresponds to 218-247 (CYHRSRKRVCKCPRPLVRQEGKPRPSEKIV).

As to quaternary structure, forms disulfide-linked heterodimers with CD8B at the cell surface. Also forms homodimers in several cell types including NK-cells or peripheral blood T-lymphocytes. Interacts with the MHC class I HLA-A/B2M dimer. Interacts with LCK in a zinc-dependent manner. In terms of processing, palmitoylated, but association with CD8B seems to be more important for the enrichment of CdD8A in lipid rafts. Post-translationally, phosphorylated in cytotoxic T-lymphocytes (CTLs) following activation.

Its subcellular location is the cell membrane. Its function is as follows. Integral membrane glycoprotein that plays an essential role in the immune response and serves multiple functions in responses against both external and internal offenses. In T-cells, functions primarily as a coreceptor for MHC class I molecule:peptide complex. The antigens presented by class I peptides are derived from cytosolic proteins while class II derived from extracellular proteins. Interacts simultaneously with the T-cell receptor (TCR) and the MHC class I proteins presented by antigen presenting cells (APCs). In turn, recruits the Src kinase LCK to the vicinity of the TCR-CD3 complex. LCK then initiates different intracellular signaling pathways by phosphorylating various substrates ultimately leading to lymphokine production, motility, adhesion and activation of cytotoxic T-lymphocytes (CTLs). This mechanism enables CTLs to recognize and eliminate infected cells and tumor cells. In NK-cells, the presence of CD8A homodimers at the cell surface provides a survival mechanism allowing conjugation and lysis of multiple target cells. CD8A homodimer molecules also promote the survival and differentiation of activated lymphocytes into memory CD8 T-cells. The chain is T-cell surface glycoprotein CD8 alpha chain (Cd8a) from Mus musculus (Mouse).